The primary structure comprises 372 residues: tRNA-specific 2-thiouridylase MnmA 1 (372 aa).

Residues 26–33 (AISGGVDS) and Met-52 contribute to the ATP site. Cys-118 serves as the catalytic Nucleophile. Residues Cys-118 and Cys-214 are joined by a disulfide bond. Gly-142 contacts ATP. The interaction with tRNA stretch occupies residues 164 to 166 (KDQ). Residue Cys-214 is the Cysteine persulfide intermediate of the active site.

The protein belongs to the MnmA/TRMU family.

Its subcellular location is the cytoplasm. The enzyme catalyses S-sulfanyl-L-cysteinyl-[protein] + uridine(34) in tRNA + AH2 + ATP = 2-thiouridine(34) in tRNA + L-cysteinyl-[protein] + A + AMP + diphosphate + H(+). Functionally, catalyzes the 2-thiolation of uridine at the wobble position (U34) of tRNA, leading to the formation of s(2)U34. This Syntrophus aciditrophicus (strain SB) protein is tRNA-specific 2-thiouridylase MnmA 1.